Reading from the N-terminus, the 255-residue chain is 3-dehydroquinate dehydratase (255 aa).

3-dehydroquinate contacts are provided by residues 47-49 and R83; that span reads EWR. Catalysis depends on H144, which acts as the Proton donor/acceptor. The Schiff-base intermediate with substrate role is filled by K171. 3-dehydroquinate-binding residues include R214, S233, and Q237.

It belongs to the type-I 3-dehydroquinase family. In terms of assembly, homodimer or homotetramer.

The catalysed reaction is 3-dehydroquinate = 3-dehydroshikimate + H2O. The protein operates within metabolic intermediate biosynthesis; chorismate biosynthesis; chorismate from D-erythrose 4-phosphate and phosphoenolpyruvate: step 3/7. Its function is as follows. Involved in the third step of the chorismate pathway, which leads to the biosynthesis of aromatic amino acids. Catalyzes the cis-dehydration of 3-dehydroquinate (DHQ) and introduces the first double bond of the aromatic ring to yield 3-dehydroshikimate. The reaction involves the formation of an imine intermediate between the keto group of 3-dehydroquinate and the epsilon-amino group of Lys-170 at the active site. This chain is 3-dehydroquinate dehydratase, found in Clostridioides difficile (strain 630) (Peptoclostridium difficile).